Consider the following 256-residue polypeptide: Calsenilin (256 aa).

The disordered stretch occupies residues 1 to 30 (MQRAKEVMKVSDGSLLGEPGRTPLSKKEGV). Position 14 is a phosphoserine (Ser14). A Glycyl lysine isopeptide (Lys-Gly) (interchain with G-Cter in SUMO1) cross-link involves residue Lys26. S-palmitoyl cysteine attachment occurs at residues Cys45 and Cys46. 2 positions are modified to phosphoserine: Ser60 and Ser63. Residues 67–123 (LELSAVRHQPEGLDQLQAQTKFTKKELQSLYRGFKNECPTGLVDEDTFKLIYSQFFP) form the EF-hand 1; degenerate domain. Lys90 is covalently cross-linked (Glycyl lysine isopeptide (Lys-Gly) (interchain with G-Cter in SUMO1)). EF-hand domains lie at 126–161 (DATT…LLRG), 162–197 (TVHE…IYDM), and 210–245 (APLE…DENI). Ca(2+) contacts are provided by Asp175, Asn177, Asp179, Tyr181, Glu186, Asp223, Asn225, Asp227, and Glu234. Residues 243–256 (ENIMSSMQLFENVI) form an interaction with KCND2 region.

This sequence belongs to the recoverin family. As to quaternary structure, binds to DNA as a homomultimer. Dimerization is induced by binding to calcium. Interacts with the C-terminus of PSEN1 and PSEN2 and with PSEN2 CTF subunit. Associates with KCN1. Component of heteromultimeric potassium channels. Identified in potassium channel complexes containing KCND1, KCND2, KCND3, KCNIP1, KCNIP2, KCNIP3, KCNIP4, DPP6 and DPP10. Interacts with KCND2 and KCND3. Palmitoylated. Palmitoylation enhances association with the plasma membrane. Post-translationally, proteolytically cleaved by caspase-3.

It localises to the cytoplasm. Its subcellular location is the cell membrane. The protein resides in the endoplasmic reticulum. The protein localises to the golgi apparatus. It is found in the nucleus. In terms of biological role, regulatory subunit of Kv4/D (Shal)-type voltage-gated rapidly inactivating A-type potassium channels, such as KCND2/Kv4.2 and KCND3/Kv4.3. Modulates channel expression at the cell membrane, gating characteristics, inactivation kinetics and rate of recovery from inactivation in a calcium-dependent and isoform-specific manner. May play a role in the regulation of PSEN2 proteolytic processing and apoptosis. Together with PSEN2 involved in modulation of amyloid-beta formation. Its function is as follows. Calcium-dependent transcriptional repressor that binds to the DRE element of genes including PDYN and FOS. Affinity for DNA is reduced upon binding to calcium and enhanced by binding to magnesium. Seems to be involved in nociception. The polypeptide is Calsenilin (KCNIP3) (Bos taurus (Bovine)).